The sequence spans 454 residues: MALNVVILAAGKGTRMRSDLPKVLHPIAHKSMVQHVIDTAHCIGSDAIQLVYGYGADKLKLALGEQQLNWMLQAEQLGTGHAVAQAIPNIDDNDTVLILYGDVPLIQASTLEALLAARPDQGVAILTVNLSNPTGYGRIVREQGKVVGIVEQKDANAEQLAINEINTGIMAVPGKALKTWLGRLSNNNAQGEYYLTDIIAMAHADGVEINTAQPQSAIEVEGANNRVQLAQLERAYQAREAEKLMIAGANLRDPSRIDIRGEVTVGMDVMVDVNVIFEGKVVIGNNVSIGAGAILIDCEIADNAEIKPYSIIEGAKLGVAASAGPFARLRPGAELMQDAHIGNFVEMKKAVLGVGSKAGHLAYLGDAQIGAGVNIGAGTITCNYDGANKHLTVIEDNVFVGSDTQLVAPVTIGKGATLGAGSTITRDVGEDELVITRVKQKHLTGWQRPVKIKE.

The pyrophosphorylase stretch occupies residues 1–226 (MALNVVILAA…AIEVEGANNR (226 aa)). Residues 8 to 11 (LAAG), lysine 22, glutamine 73, 78 to 79 (GT), 100 to 102 (YGD), glycine 137, glutamate 151, asparagine 166, and asparagine 224 contribute to the UDP-N-acetyl-alpha-D-glucosamine site. Aspartate 102 contacts Mg(2+). Asparagine 224 is a binding site for Mg(2+). A linker region spans residues 227 to 247 (VQLAQLERAYQAREAEKLMIA). The segment at 248–454 (GANLRDPSRI…GWQRPVKIKE (207 aa)) is N-acetyltransferase. UDP-N-acetyl-alpha-D-glucosamine contacts are provided by arginine 330 and lysine 348. Histidine 360 functions as the Proton acceptor in the catalytic mechanism. UDP-N-acetyl-alpha-D-glucosamine is bound by residues tyrosine 363 and asparagine 374. Acetyl-CoA contacts are provided by residues alanine 377, 383–384 (NY), serine 402, alanine 420, and arginine 437.

The protein in the N-terminal section; belongs to the N-acetylglucosamine-1-phosphate uridyltransferase family. It in the C-terminal section; belongs to the transferase hexapeptide repeat family. As to quaternary structure, homotrimer. Requires Mg(2+) as cofactor.

It is found in the cytoplasm. It catalyses the reaction alpha-D-glucosamine 1-phosphate + acetyl-CoA = N-acetyl-alpha-D-glucosamine 1-phosphate + CoA + H(+). The catalysed reaction is N-acetyl-alpha-D-glucosamine 1-phosphate + UTP + H(+) = UDP-N-acetyl-alpha-D-glucosamine + diphosphate. Its pathway is nucleotide-sugar biosynthesis; UDP-N-acetyl-alpha-D-glucosamine biosynthesis; N-acetyl-alpha-D-glucosamine 1-phosphate from alpha-D-glucosamine 6-phosphate (route II): step 2/2. The protein operates within nucleotide-sugar biosynthesis; UDP-N-acetyl-alpha-D-glucosamine biosynthesis; UDP-N-acetyl-alpha-D-glucosamine from N-acetyl-alpha-D-glucosamine 1-phosphate: step 1/1. It participates in bacterial outer membrane biogenesis; LPS lipid A biosynthesis. Functionally, catalyzes the last two sequential reactions in the de novo biosynthetic pathway for UDP-N-acetylglucosamine (UDP-GlcNAc). The C-terminal domain catalyzes the transfer of acetyl group from acetyl coenzyme A to glucosamine-1-phosphate (GlcN-1-P) to produce N-acetylglucosamine-1-phosphate (GlcNAc-1-P), which is converted into UDP-GlcNAc by the transfer of uridine 5-monophosphate (from uridine 5-triphosphate), a reaction catalyzed by the N-terminal domain. This is Bifunctional protein GlmU from Shewanella sp. (strain MR-7).